The sequence spans 275 residues: Autophagy protein 5 (275 aa).

Met1 bears the N-acetylmethionine mark. A Glycyl lysine isopeptide (Lys-Gly) (interchain with G-Cter in ATG12) cross-link involves residue Lys130.

Belongs to the ATG5 family. In terms of assembly, forms a conjugate with ATG12. Part of the minor complex composed of 4 sets of ATG12-ATG5 and ATG16L1 (400 kDa); this complex interacts with ATG3 leading to disruption of ATG7 interaction and promotion of ATG8-like proteins lipidation. Forms an 800-kDa complex composed of ATG12-ATG5 and ATG16L2. The ATG12-ATG5 conjugate interacts with RAB33A; this interaction is bridged by ATG16L1 and promotes ATG12-ATG5-ATG16L1 complex recruitment to phagophores. Interacts with TECPR1; the interaction is direct and does not take place when ATG16L1 is associated with the ATG5-ATG12 conjugate. Interacts with DHX58/RIG-1, IFIH1/MDA5 and MAVS/IPS-1 in monomeric form as well as in ATG12-ATG5 conjugate form. The interaction with MAVS is further enhanced upon vesicular stomatitis virus (VSV) infection. Interacts with ATG3. Interacts with ATG7 and ATG10. Interacts with FADD. Interacts with Bassoon/BSN; this interaction is important for the regulation of presynaptic autophagy. Interacts with ATG16L2. In terms of processing, conjugated to ATG12; which is essential for autophagy, but is not required for association with isolation membrane. Acetylated by EP300.

It is found in the cytoplasm. The protein resides in the preautophagosomal structure membrane. Involved in autophagic vesicle formation. Conjugation with ATG12, through a ubiquitin-like conjugating system involving ATG7 as an E1-like activating enzyme and ATG10 as an E2-like conjugating enzyme, is essential for its function. The ATG12-ATG5 conjugate acts as an E3-like enzyme which is required for lipidation of ATG8 family proteins and their association to the vesicle membranes. Involved in mitochondrial quality control after oxidative damage, and in subsequent cellular longevity. Plays a critical role in multiple aspects of lymphocyte development and is essential for both B and T lymphocyte survival and proliferation. Required for optimal processing and presentation of antigens for MHC II. Involved in the maintenance of axon morphology and membrane structures, as well as in normal adipocyte differentiation. Promotes primary ciliogenesis through removal of OFD1 from centriolar satellites and degradation of IFT20 via the autophagic pathway. As part of the ATG8 conjugation system with ATG12 and ATG16L1, required for recruitment of LRRK2 to stressed lysosomes and induction of LRRK2 kinase activity in response to lysosomal stress. Functionally, may play an important role in the apoptotic process, possibly within the modified cytoskeleton. Its expression is a relatively late event in the apoptotic process, occurring downstream of caspase activity. Plays a crucial role in IFN-gamma-induced autophagic cell death by interacting with FADD. The polypeptide is Autophagy protein 5 (Bos taurus (Bovine)).